The following is a 146-amino-acid chain: MATQPATESVQCFGRKKTAVAVTHCKRGSGLIKLNGCPIELFQPEILRFKIFEPVLLLGKHRFAGVNMRIRVNGGGHTSQVYAIRQSIAKALVAYYQKYVDEQSKKEIKDILVRYDRTLLVADPRRCEPKKFGGRGARSRYQKSYR.

It belongs to the universal ribosomal protein uS9 family.

The protein resides in the cytoplasm. This Arabidopsis thaliana (Mouse-ear cress) protein is Small ribosomal subunit protein uS9x (RPS16C).